A 376-amino-acid polypeptide reads, in one-letter code: N-acetyldiaminopimelate deacetylase (376 aa).

Aspartate 69 is a catalytic residue. Glutamate 128 acts as the Proton acceptor in catalysis.

It belongs to the peptidase M20A family. N-acetyldiaminopimelate deacetylase subfamily.

It carries out the reaction N-acetyl-(2S,6S)-2,6-diaminopimelate + H2O = (2S,6S)-2,6-diaminopimelate + acetate. It participates in amino-acid biosynthesis; L-lysine biosynthesis via DAP pathway; LL-2,6-diaminopimelate from (S)-tetrahydrodipicolinate (acetylase route): step 3/3. Functionally, catalyzes the conversion of N-acetyl-diaminopimelate to diaminopimelate and acetate. This is N-acetyldiaminopimelate deacetylase from Bacillus mycoides (strain KBAB4) (Bacillus weihenstephanensis).